Reading from the N-terminus, the 491-residue chain is Cobyric acid synthase (491 aa).

Positions 246–432 (RKLIACPILP…VHGLLADAEL (187 aa)) constitute a GATase cobBQ-type domain. Residue cysteine 328 is the Nucleophile of the active site. Residue histidine 424 is part of the active site.

The protein belongs to the CobB/CobQ family. CobQ subfamily.

It participates in cofactor biosynthesis; adenosylcobalamin biosynthesis. In terms of biological role, catalyzes amidations at positions B, D, E, and G on adenosylcobyrinic A,C-diamide. NH(2) groups are provided by glutamine, and one molecule of ATP is hydrogenolyzed for each amidation. The sequence is that of Cobyric acid synthase from Novosphingobium aromaticivorans (strain ATCC 700278 / DSM 12444 / CCUG 56034 / CIP 105152 / NBRC 16084 / F199).